The sequence spans 91 residues: Non-specific lipid-transfer protein P3 (91 aa).

4 cysteine pairs are disulfide-bonded: Cys-3/Cys-50, Cys-13/Cys-27, Cys-28/Cys-73, and Cys-48/Cys-87.

Its subcellular location is the secreted. Plant non-specific lipid-transfer proteins transfer phospholipids as well as galactolipids across membranes. May play a role in wax or cutin deposition in the cell walls of expanding epidermal cells and certain secretory tissues. This Vitis sp. (Grape) protein is Non-specific lipid-transfer protein P3.